The primary structure comprises 341 residues: S-adenosylmethionine:tRNA ribosyltransferase-isomerase (341 aa).

It belongs to the QueA family. Monomer.

It is found in the cytoplasm. The enzyme catalyses 7-aminomethyl-7-carbaguanosine(34) in tRNA + S-adenosyl-L-methionine = epoxyqueuosine(34) in tRNA + adenine + L-methionine + 2 H(+). Its pathway is tRNA modification; tRNA-queuosine biosynthesis. In terms of biological role, transfers and isomerizes the ribose moiety from AdoMet to the 7-aminomethyl group of 7-deazaguanine (preQ1-tRNA) to give epoxyqueuosine (oQ-tRNA). This is S-adenosylmethionine:tRNA ribosyltransferase-isomerase from Staphylococcus epidermidis (strain ATCC 12228 / FDA PCI 1200).